Here is a 423-residue protein sequence, read N- to C-terminus: MAFNPFALGRPDLLLPFMGAGVGGPGAGGPPPNLFFSMLQAGFPPGPVGSPPEDDGVTDDPKVELDERELWQQFSQCGTEMVITKSGRRIFPAYRVKISGLDKKSQYFVMMDLVPADEHRYKFNNSRWMIAGKADPEMPKTLYIHPDSPSTGEHWMSKGANFHKLKLTNNISDKHGYTILNSMHKYQPRLHVVRCADRHNLMYSTFRTFVFRETEFIAVTAYQNEKVTELKIENNPFAKGFRDAGAGKREKKRQLHRMNGDATQSPPGKTASLPTHSPHPSESNSEDDEPTLKKCKPEPSQTPTTSSLSTSTTPTLSAHHPLRSPQFCIPPPIDMMYQNMPMDLLAHWQMATLFPQFSMALNSPAAAASLLSKHLAKASSECKVEATSEDSEEAEKPEVKKEQKSVTPPKKGGFDVLDLLSKP.

Positions 70–243 (LWQQFSQCGT…NNPFAKGFRD (174 aa)) form a DNA-binding region, T-box. Disordered regions lie at residues 238–324 (AKGF…PLRS) and 384–423 (VEATSEDSEEAEKPEVKKEQKSVTPPKKGGFDVLDLLSKP). Positions 261-283 (DATQSPPGKTASLPTHSPHPSES) are enriched in polar residues. Over residues 302–317 (TPTTSSLSTSTTPTLS) the composition is skewed to low complexity. A compositionally biased stretch (basic and acidic residues) spans 394–404 (AEKPEVKKEQK).

Sumoylated. Expressed in body wall muscles and a subset of pharyngeal neurons. Expressed in head neurons and occassionally tail neurons. Not expressed in the pharynx.

It is found in the nucleus. Involved in the transcriptional regulation of genes required for the development of pharyngeal muscles derived from the ABa lineage. Acts as a transcriptional repressor and binds to T-box binding sites in its own promoter to negatively autoregulate its own expression in neurons, seam cells and the gut in order to restrict its expression to certain tissues. May function together with the nfya-1-NF-Y complex to repress its own expression. Plays a role in neural fate specification in the hermaphrodite-specific neuron (HSN)/PHB neuron lineage, acting in concert with homeobox protein egl-5 and the asymmetric cell division protein ham-1. This Caenorhabditis elegans protein is T-box protein 2.